The following is a 127-amino-acid chain: Large ribosomal subunit protein bL19 (127 aa).

Belongs to the bacterial ribosomal protein bL19 family.

Functionally, this protein is located at the 30S-50S ribosomal subunit interface and may play a role in the structure and function of the aminoacyl-tRNA binding site. This chain is Large ribosomal subunit protein bL19, found in Acidovorax ebreus (strain TPSY) (Diaphorobacter sp. (strain TPSY)).